A 241-amino-acid polypeptide reads, in one-letter code: ATP synthase subunit a (241 aa).

The next 5 membrane-spanning stretches (helical) occupy residues 30–50, 91–111, 128–148, 193–213, and 214–234; these read GQVF…VVVG, FIGT…LVPW, INTT…AGLS, LVVA…VMFL, and GLFT…YYIG.

It belongs to the ATPase A chain family. As to quaternary structure, F-type ATPases have 2 components, CF(1) - the catalytic core - and CF(0) - the membrane proton channel. CF(1) has five subunits: alpha(3), beta(3), gamma(1), delta(1), epsilon(1). CF(0) has four main subunits: a, b, b' and c.

Its subcellular location is the cellular thylakoid membrane. Its function is as follows. Key component of the proton channel; it plays a direct role in the translocation of protons across the membrane. The chain is ATP synthase subunit a from Prochlorococcus marinus (strain MIT 9211).